Here is a 330-residue protein sequence, read N- to C-terminus: Mas-related G-protein coupled receptor member X2 (330 aa).

The Extracellular portion of the chain corresponds to 1–33 (MDPTTPAWGTESTTMNGNDQALPLLCGKETLIL). Residues 34-54 (VLLILFIALVGLVGNAFVLWL) form a helical membrane-spanning segment. Residues 55–63 (LGFRMRRNA) lie on the Cytoplasmic side of the membrane. The helical transmembrane segment at 64 to 84 (FSVYVLSLAGADFLFLCFPMI) threads the bilayer. At 85–96 (NCLEYLINFFHS) the chain is on the extracellular side. The helical transmembrane segment at 97-117 (ISINFPSFFTTVMTCAYLAGL) threads the bilayer. The Cytoplasmic segment spans residues 118 to 144 (SMLSAISTERCLSVLWPIWYRCRRPRH). A helical transmembrane segment spans residues 145–165 (LSAVLCVLLWALSLLLSILEG). The Extracellular portion of the chain corresponds to 166–184 (KFCGLLFSDGDSGWCQTFD). The chain crosses the membrane as a helical span at residues 185–205 (FITAAWLMFLFVVLCGSSLAL). At 206 to 228 (LVRILCGSQGLPLTRLYLTILLT) the chain is on the cytoplasmic side. Residues 229-249 (VLIFLLCGLPFGIQWFLILWI) traverse the membrane as a helical segment. Residues 250-264 (WKNSDVLFCHIHPVS) lie on the Extracellular side of the membrane. The helical transmembrane segment at 265–285 (VVLSSFNSSANPIIYFFVGSF) threads the bilayer. The Cytoplasmic portion of the chain corresponds to 286–330 (RKQWRLRQPVLKLALQRALQDTAEVDHSEGCFSQGTLEMSGSSLV).

It belongs to the G-protein coupled receptor 1 family. Mas subfamily.

The protein resides in the cell membrane. Mast cell-specific receptor for basic secretagogues, i.e. cationic amphiphilic drugs, as well as endo- or exogenous peptides, consisting of a basic head group and a hydrophobic core. Recognizes and binds small molecules containing a cyclized tetrahydroisoquinoline (THIQ), such as non-steroidal neuromuscular blocking drugs (NMBDs), including tubocurarine and atracurium. In response to these compounds, mediates pseudo-allergic reactions characterized by histamine release, inflammation and airway contraction. This chain is Mas-related G-protein coupled receptor member X2 (MRGPRX2), found in Rhinopithecus bieti (Black snub-nosed monkey).